Consider the following 406-residue polypeptide: Acetate kinase (406 aa).

A Mg(2+)-binding site is contributed by Asn-7. Residue Lys-14 coordinates ATP. Arg-90 is a binding site for substrate. Catalysis depends on Asp-147, which acts as the Proton donor/acceptor. ATP is bound by residues 207 to 211 (HLGNG), 283 to 285 (DMR), and 331 to 335 (GVGEN). Glu-385 contacts Mg(2+).

It belongs to the acetokinase family. As to quaternary structure, homodimer. Requires Mg(2+) as cofactor. It depends on Mn(2+) as a cofactor.

It localises to the cytoplasm. The enzyme catalyses acetate + ATP = acetyl phosphate + ADP. It participates in metabolic intermediate biosynthesis; acetyl-CoA biosynthesis; acetyl-CoA from acetate: step 1/2. Catalyzes the formation of acetyl phosphate from acetate and ATP. Can also catalyze the reverse reaction. In Thermosipho melanesiensis (strain DSM 12029 / CIP 104789 / BI429), this protein is Acetate kinase.